The following is a 214-amino-acid chain: Octanoyltransferase (214 aa).

In terms of domain architecture, BPL/LPL catalytic spans 34 to 214; the sequence is GLQKELVWLL…KFNEIFSSFN (181 aa). Substrate-binding positions include 73–80, 145–147, and 158–160; these read RGGKYTYH, AFG, and GVS. Cysteine 176 functions as the Acyl-thioester intermediate in the catalytic mechanism.

Belongs to the LipB family.

The protein resides in the cytoplasm. It carries out the reaction octanoyl-[ACP] + L-lysyl-[protein] = N(6)-octanoyl-L-lysyl-[protein] + holo-[ACP] + H(+). Its pathway is protein modification; protein lipoylation via endogenous pathway; protein N(6)-(lipoyl)lysine from octanoyl-[acyl-carrier-protein]: step 1/2. Its function is as follows. Catalyzes the transfer of endogenously produced octanoic acid from octanoyl-acyl-carrier-protein onto the lipoyl domains of lipoate-dependent enzymes. Lipoyl-ACP can also act as a substrate although octanoyl-ACP is likely to be the physiological substrate. This chain is Octanoyltransferase, found in Ehrlichia canis (strain Jake).